We begin with the raw amino-acid sequence, 262 residues long: 5'-nucleotidase SurE (262 aa).

Residues Asp-8, Asp-9, Ser-40, and Asn-92 each coordinate a divalent metal cation.

Belongs to the SurE nucleotidase family. A divalent metal cation is required as a cofactor.

It is found in the cytoplasm. It catalyses the reaction a ribonucleoside 5'-phosphate + H2O = a ribonucleoside + phosphate. Nucleotidase that shows phosphatase activity on nucleoside 5'-monophosphates. The protein is 5'-nucleotidase SurE of Xylella fastidiosa (strain 9a5c).